The following is a 166-amino-acid chain: MNRTALYAGSFDPVTNGHVDVIRQACRLVGRLVIAIGVHPGKTPLFSAEERAELIRATCDPIAAAEGSALEVVTFDDLAVSAARRAGASLFIRGLRDGTDLDYEMQLAGMNSAMAPEVQTVFLPASTGVRPITATLVRQIAAMGGDVRPFVPELVAERLEARFAKP.

Ser-10 contributes to the substrate binding site. ATP is bound by residues 10 to 11 (SF) and His-18. Positions 42, 79, and 93 each coordinate substrate. ATP contacts are provided by residues 94 to 96 (GLR), Glu-104, and 129 to 135 (VRPITAT).

Belongs to the bacterial CoaD family. In terms of assembly, homohexamer. It depends on Mg(2+) as a cofactor.

The protein resides in the cytoplasm. The enzyme catalyses (R)-4'-phosphopantetheine + ATP + H(+) = 3'-dephospho-CoA + diphosphate. It participates in cofactor biosynthesis; coenzyme A biosynthesis; CoA from (R)-pantothenate: step 4/5. Reversibly transfers an adenylyl group from ATP to 4'-phosphopantetheine, yielding dephospho-CoA (dPCoA) and pyrophosphate. The protein is Phosphopantetheine adenylyltransferase of Methylobacterium nodulans (strain LMG 21967 / CNCM I-2342 / ORS 2060).